The primary structure comprises 194 residues: 7-methyl-GTP pyrophosphatase (194 aa).

The Proton acceptor role is filled by D69.

It belongs to the Maf family. YceF subfamily. A divalent metal cation is required as a cofactor.

It localises to the cytoplasm. The catalysed reaction is N(7)-methyl-GTP + H2O = N(7)-methyl-GMP + diphosphate + H(+). Its function is as follows. Nucleoside triphosphate pyrophosphatase that hydrolyzes 7-methyl-GTP (m(7)GTP). May have a dual role in cell division arrest and in preventing the incorporation of modified nucleotides into cellular nucleic acids. The protein is 7-methyl-GTP pyrophosphatase (yceF1) of Shigella boydii serotype 4 (strain Sb227).